The sequence spans 57 residues: Ribosome modulation factor 1 (57 aa).

Basic residues predominate over residues 1 to 14; sequence MKRQKRDRQSRAHT. The interval 1 to 24 is disordered; it reads MKRQKRDRQSRAHTRGYQAGISGR.

Belongs to the ribosome modulation factor family.

The protein resides in the cytoplasm. In terms of biological role, during stationary phase, converts 70S ribosomes to an inactive dimeric form (100S ribosomes). This chain is Ribosome modulation factor 1, found in Colwellia psychrerythraea (strain 34H / ATCC BAA-681) (Vibrio psychroerythus).